The sequence spans 500 residues: Lycopene beta cyclase, chloroplastic (500 aa).

Residues 1 to 81 constitute a chloroplast transit peptide; it reads MDTLLKTPNN…ELPMYDPSKG (81 aa). Position 86 to 114 (86 to 114) interacts with NAD(+); that stretch reads LAVVGGGPAGLAVAQQVSEAGLSVCSIDP.

It belongs to the lycopene cyclase family.

It localises to the plastid. Its subcellular location is the chloroplast. The catalysed reaction is a carotenoid psi-end group = a carotenoid beta-end derivative. It functions in the pathway carotenoid biosynthesis; beta-carotene biosynthesis. It participates in carotenoid biosynthesis; beta-zeacarotene biosynthesis. In terms of biological role, catalyzes the double cyclization reaction which converts lycopene to beta-carotene and neurosporene to beta-zeacarotene. This chain is Lycopene beta cyclase, chloroplastic (LCY1), found in Solanum lycopersicum (Tomato).